The sequence spans 158 residues: MKRFKKVVVGGTFDRLHLGHKALLRKAFEVGKIVYIGLTSDEMVKEKPYAEKILPYERRLKDLIEFLEVNNFKGYRIIKINNAIGFTTEIRSLEAIVVSEETYKGALIVNRAREEVGLKPLEIIVIPIIKSKLGCKISSSLIRAGLIDPFGNPMKPRS.

It belongs to the eukaryotic CoaD family.

It localises to the cytoplasm. The enzyme catalyses (R)-4'-phosphopantetheine + ATP + H(+) = 3'-dephospho-CoA + diphosphate. It participates in cofactor biosynthesis; coenzyme A biosynthesis. Functionally, reversibly transfers an adenylyl group from ATP to 4'-phosphopantetheine, yielding dephospho-CoA (dPCoA) and pyrophosphate. This chain is Phosphopantetheine adenylyltransferase, found in Pyrococcus horikoshii (strain ATCC 700860 / DSM 12428 / JCM 9974 / NBRC 100139 / OT-3).